The sequence spans 332 residues: L-lactate dehydrogenase C chain (332 aa).

Serine 2 is modified (blocked amino end (Ser)). NAD(+) is bound by residues 29 to 57 and arginine 99; that span reads GNVG…DTNK. Residues arginine 106, asparagine 138, and arginine 169 each contribute to the substrate site. Asparagine 138 is a binding site for NAD(+). Catalysis depends on histidine 193, which acts as the Proton acceptor. Substrate is bound at residue threonine 248.

This sequence belongs to the LDH/MDH superfamily. LDH family. In terms of assembly, homotetramer. Interacts with RABL2/RABL2A; binds preferentially to GTP-bound RABL2. As to expression, expressed within the midpiece of sperm tail (at protein level).

Its subcellular location is the cytoplasm. The catalysed reaction is (S)-lactate + NAD(+) = pyruvate + NADH + H(+). It participates in fermentation; pyruvate fermentation to lactate; (S)-lactate from pyruvate: step 1/1. Functionally, possible role in sperm motility. The sequence is that of L-lactate dehydrogenase C chain (Ldhc) from Mus musculus (Mouse).